The primary structure comprises 342 residues: tRNA N6-adenosine threonylcarbamoyltransferase (342 aa).

Residues H111 and H115 each contribute to the Fe cation site. Substrate contacts are provided by residues 133 to 137, D166, G179, D183, and N272; that span reads AVSGG. D300 contacts Fe cation.

The protein belongs to the KAE1 / TsaD family. Fe(2+) is required as a cofactor.

It localises to the cytoplasm. The enzyme catalyses L-threonylcarbamoyladenylate + adenosine(37) in tRNA = N(6)-L-threonylcarbamoyladenosine(37) in tRNA + AMP + H(+). In terms of biological role, required for the formation of a threonylcarbamoyl group on adenosine at position 37 (t(6)A37) in tRNAs that read codons beginning with adenine. Is involved in the transfer of the threonylcarbamoyl moiety of threonylcarbamoyl-AMP (TC-AMP) to the N6 group of A37, together with TsaE and TsaB. TsaD likely plays a direct catalytic role in this reaction. The chain is tRNA N6-adenosine threonylcarbamoyltransferase from Geobacter sp. (strain M21).